The chain runs to 773 residues: Cytochrome c oxidase subunit 1+2 (773 aa).

The segment at 1–491 (MKLLEIYDKQ…LIASYGSLIT (491 aa)) is COX1. The chain crosses the membrane as a helical span at residues 41–61 (TMYITFSIFAGIIGTLLSLVI). Residue Glu64 coordinates Ca(2+). His85 is a binding site for Fe(II)-heme a. A run of 6 helical transmembrane segments spans residues 87-111 (LIMI…NWFL), 130-150 (LWLI…GIGA), 173-193 (VGIL…INFL), 211-231 (LFVW…PVLA), 262-278 (LFHP…FGII), and 290-310 (IFGV…GFLV). Residue His264 coordinates Cu cation. The segment at residues 264–268 (HPEVY) is a cross-link (1'-histidyl-3'-tyrosine (His-Tyr)). Tyr268 provides a ligand contact to O2. His314 and His315 together coordinate Cu cation. 2 consecutive transmembrane segments (helical) span residues 335–355 (IIAI…WGGV) and 362–382 (MLFV…GVVL). Residues His392 and Asp393 each contribute to the Mg(2+) site. The next 5 membrane-spanning stretches (helical) occupy residues 396-416 (YVVA…IFAG), 444-464 (FWTM…LGLA), 483-503 (IASY…VNIF), 555-575 (IFFY…RILW), and 604-624 (GTVI…LIAI). His400 lines the heme a3 pocket. His402 contributes to the Fe(II)-heme a binding site. Positions 492–773 (AFGLLFFFVN…VQEYLGRLYK (282 aa)) are COX2. 4 residues coordinate Cu cation: His709, Cys744, Cys748, and His752.

The protein in the N-terminal section; belongs to the heme-copper respiratory oxidase family. In the C-terminal section; belongs to the cytochrome c oxidase subunit 2 family. As to quaternary structure, component of the cytochrome c oxidase (complex IV, CIV), a multisubunit enzyme composed of a catalytic core of 3 subunits and several supernumerary subunits. The complex exists as a monomer or a dimer and forms supercomplexes (SCs) in the inner mitochondrial membrane with ubiquinol-cytochrome c oxidoreductase (cytochrome b-c1 complex, complex III, CIII). It depends on heme as a cofactor. Cu cation serves as cofactor.

The protein localises to the mitochondrion inner membrane. It catalyses the reaction 4 Fe(II)-[cytochrome c] + O2 + 8 H(+)(in) = 4 Fe(III)-[cytochrome c] + 2 H2O + 4 H(+)(out). It functions in the pathway energy metabolism; oxidative phosphorylation. In terms of biological role, component of the cytochrome c oxidase, the last enzyme in the mitochondrial electron transport chain which drives oxidative phosphorylation. The respiratory chain contains 3 multisubunit complexes succinate dehydrogenase (complex II, CII), ubiquinol-cytochrome c oxidoreductase (cytochrome b-c1 complex, complex III, CIII) and cytochrome c oxidase (complex IV, CIV), that cooperate to transfer electrons derived from NADH and succinate to molecular oxygen, creating an electrochemical gradient over the inner membrane that drives transmembrane transport and the ATP synthase. Cytochrome c oxidase is the component of the respiratory chain that catalyzes the reduction of oxygen to water. Electrons originating from reduced cytochrome c in the intermembrane space (IMS) are transferred via the dinuclear copper A center (CU(A)) of subunit 2 and heme A of subunit 1 to the active site in subunit 1, a binuclear center (BNC) formed by heme A3 and copper B (CU(B)). The BNC reduces molecular oxygen to 2 water molecules using 4 electrons from cytochrome c in the IMS and 4 protons from the mitochondrial matrix. This is Cytochrome c oxidase subunit 1+2 (cox1/2) from Dictyostelium citrinum (Slime mold).